The primary structure comprises 649 residues: Beta-galactosidase-1-like protein 3 (649 aa).

E203 acts as the Proton donor in catalysis. E277 acts as the Nucleophile in catalysis.

This sequence belongs to the glycosyl hydrolase 35 family.

This chain is Beta-galactosidase-1-like protein 3 (Glb1l3), found in Mus musculus (Mouse).